Consider the following 510-residue polypeptide: P-(S)-hydroxymandelonitrile lyase (510 aa).

The first 34 residues, methionine 1–alanine 34, serve as a signal peptide directing secretion. Residue asparagine 116–glycine 118 coordinates substrate. 3 disulfides stabilise this stretch: cysteine 121–cysteine 377, cysteine 277–cysteine 289, and cysteine 313–cysteine 344. Asparagine 172 carries an N-linked (GlcNAc...) asparagine glycan. Position 212–213 (glutamate 212–serine 213) interacts with substrate. The active site involves serine 213. N-linked (GlcNAc...) asparagine glycosylation occurs at asparagine 365. Residues aspartate 414 and histidine 469 contribute to the active site. Serine 465–histidine 469 contacts substrate.

Belongs to the peptidase S10 family. Heterotetramer of two A and two B chains. The A and B chains are linked by a disulfide bond. In terms of processing, the N-terminus of chain A is blocked. Primary leaves of seedlings.

The enzyme catalyses (S)-4-hydroxymandelonitrile = 4-hydroxybenzaldehyde + hydrogen cyanide. Functionally, involved in cyanogenesis, the release of HCN from injured tissues. Is involved in the catabolism of the cyanogenic glycoside dhurrin. The sequence is that of P-(S)-hydroxymandelonitrile lyase from Sorghum bicolor (Sorghum).